We begin with the raw amino-acid sequence, 78 residues long: Small ribosomal subunit protein bS21A (78 aa).

Residues 30–52 (MKARSAYEKPSEKRAREKGEAVR) show a composition bias toward basic and acidic residues. Residues 30–78 (MKARSAYEKPSEKRAREKGEAVRRQRKLARKKLQREGLLPAPKKAVRAR) form a disordered region. Residues 53 to 62 (RQRKLARKKL) are compositionally biased toward basic residues.

This sequence belongs to the bacterial ribosomal protein bS21 family.

The chain is Small ribosomal subunit protein bS21A from Rhizobium etli (strain ATCC 51251 / DSM 11541 / JCM 21823 / NBRC 15573 / CFN 42).